A 153-amino-acid chain; its full sequence is Suppressor of RNA silencing (153 aa).

Residues 1–23 (MMATFSCVCCGTSTTSTYCGKRC) are C-1. The tract at residues 1–85 (MMATFSCVCC…IVSRFCGQKH (85 aa)) is interaction with TGB1. The segment at 19–47 (CGKRCERKHVYSETRNKRLELYKKYLLEP) is basic motif (BM). The interval 60-85 (CGMPCSIAEEACDQLPIVSRFCGQKH) is C-2. The interval 86–127 (ADLYDSLLKRSEQELLLEFLQKKMQELKLSHIVKMAKLESEV) is interaction with replication protein alpha-A. A coiled-coil region spans residues 92–132 (LLKRSEQELLLEFLQKKMQELKLSHIVKMAKLESEVNAIRK). Ser96 carries the post-translational modification Phosphoserine.

It belongs to the virgaviridae suppressor of RNA silencing family. Homooligomer. Interacts (via C-terminus) with replication protein alpha-A. Interacts (via N-terminus) with the movement protein TGB1; this interaction targets gammab-TGB1 at the periphery of chloroplasts and plasmodesmata. Interacts with host autophagy protein ATG7; this interaction disrupts the host ATG7-ATG8 interaction to promote viral infection. Interacts (via BM region) with host STY46; this interaction inhibits the viral infection. In terms of processing, phosphorylated at Ser-96 by a host PKA-like kinase; the phosphorylation at this site seems to suppress host cell death. Serine-phosphorylated by host STY46 kinase.

The protein resides in the host chloroplast envelope. The protein localises to the host endoplasmic reticulum. It is found in the host cell junction. It localises to the host plasmodesma. Its function is as follows. Suppressor of RNA-mediated gene silencing, also known as post-transcriptional gene silencing (PTGS), a mechanism of plant viral defense that limits the accumulation of viral RNAs. Promotes viral cell-to-cell long distance movement by enhancing the ATPase activity of TGB1. Enhances RNA helicase activity of replication protein alpha-A. Suppresses autophagy induced by the host as a defense mechanism against viral infection. The sequence is that of Suppressor of RNA silencing from Barley stripe mosaic virus (BSMV).